The sequence spans 78 residues: uncharacterized protein (78 aa).

The interval 58–78 (EANDPEKKIPSTAAKAISLSP) is disordered.

This is an uncharacterized protein from Vaccinia virus (strain Copenhagen) (VACV).